Consider the following 108-residue polypeptide: Class I hydrophobin eas (108 aa).

Residues 1–26 (MQFTSVFTILAIAMTAAAAPAEVVPR) form the signal peptide. 4 disulfide bridges follow: cysteine 35-cysteine 86, cysteine 44-cysteine 80, cysteine 45-cysteine 71, and cysteine 87-cysteine 106.

This sequence belongs to the fungal hydrophobin family. Self-assembles to form functional amyloid fibrils called rodlets. Self-assembly into fibrillar rodlets occurs spontaneously at hydrophobic:hydrophilic interfaces and the rodlets further associate laterally to form amphipathic monolayers.

The protein resides in the secreted. It localises to the spore wall. Aerial growth, conidiation, and dispersal of filamentous fungi in the environment rely upon a capability of their secreting small amphipathic proteins called hydrophobins (HPBs) with low sequence identity. Class I can self-assemble into an outermost layer of rodlet bundles on aerial cell surfaces, conferring cellular hydrophobicity that supports fungal growth, development and dispersal; whereas class II form highly ordered films at water-air interfaces through intermolecular interactions but contribute nothing to the rodlet structure. Eas is a class I hydrophobin that forms functional amyloid fibrils called rodlets that facilitate spore formation and dispersal. The chain is Class I hydrophobin eas from Neurospora crassa (strain ATCC 24698 / 74-OR23-1A / CBS 708.71 / DSM 1257 / FGSC 987).